We begin with the raw amino-acid sequence, 86 residues long: Large ribosomal subunit protein bL27 (86 aa).

This sequence belongs to the bacterial ribosomal protein bL27 family.

This chain is Large ribosomal subunit protein bL27, found in Xanthomonas axonopodis pv. citri (strain 306).